Here is a 441-residue protein sequence, read N- to C-terminus: uncharacterized protein (441 aa).

78–85 is a binding site for ATP; that stretch reads GPRQAGKT.

This is an uncharacterized protein from Mycobacterium bovis (strain ATCC BAA-935 / AF2122/97).